A 138-amino-acid polypeptide reads, in one-letter code: Small ribosomal subunit protein bS6 (138 aa).

Residues valine 94–glutamate 138 form a disordered region. Residues threonine 106–glutamate 138 are compositionally biased toward basic and acidic residues.

Belongs to the bacterial ribosomal protein bS6 family.

Its function is as follows. Binds together with bS18 to 16S ribosomal RNA. In Prochlorococcus marinus (strain NATL2A), this protein is Small ribosomal subunit protein bS6.